The primary structure comprises 255 residues: Placenta-expressed transcript 1 protein (255 aa).

The signal sequence occupies residues 1–26 (MPALRTLLPHLGLFLCLALCFSPSFS). Residues Asn57, Asn67, and Asn126 are each glycosylated (N-linked (GlcNAc...) asparagine). Ser236 is lipidated: GPI-anchor amidated serine. A propeptide spans 237-255 (PLAGALHILLVFLISKLLF) (removed in mature form).

N-glycosylated. In terms of processing, GPI-anchored.

It localises to the apical cell membrane. Modulates leading keratinocyte migration and cellular adhesion to matrix proteins during a wound-healing response and promotes wound repair. May play a role during trichilemmal differentiation of the hair follicle. The chain is Placenta-expressed transcript 1 protein (Plet1) from Rattus norvegicus (Rat).